A 281-amino-acid polypeptide reads, in one-letter code: NADPH-dependent 7-cyano-7-deazaguanine reductase (281 aa).

87–89 (IES) lines the substrate pocket. 89 to 90 (SK) contributes to the NADPH binding site. The active-site Thioimide intermediate is C188. The active-site Proton donor is D195. 227 to 228 (HE) serves as a coordination point for substrate. Position 256–257 (256–257 (RG)) interacts with NADPH. The segment at 261–281 (INPYRSTEQAKPDHNHRMARQ) is disordered. Basic and acidic residues predominate over residues 268-281 (EQAKPDHNHRMARQ).

This sequence belongs to the GTP cyclohydrolase I family. QueF type 2 subfamily. Homodimer.

The protein resides in the cytoplasm. The catalysed reaction is 7-aminomethyl-7-carbaguanine + 2 NADP(+) = 7-cyano-7-deazaguanine + 2 NADPH + 3 H(+). It functions in the pathway tRNA modification; tRNA-queuosine biosynthesis. Functionally, catalyzes the NADPH-dependent reduction of 7-cyano-7-deazaguanine (preQ0) to 7-aminomethyl-7-deazaguanine (preQ1). The sequence is that of NADPH-dependent 7-cyano-7-deazaguanine reductase from Vibrio vulnificus (strain YJ016).